Reading from the N-terminus, the 374-residue chain is Chaperone protein DnaJ (374 aa).

One can recognise a J domain in the interval 5–70 (DYYDVLGVAK…DKRAAYDRFG (66 aa)). The CR-type zinc finger occupies 131–209 (GCEEKIRIPT…CHGQGRVQEY (79 aa)). Zn(2+) is bound by residues C144, C147, C161, C164, C183, C186, C197, and C200. 4 CXXCXGXG motif repeats span residues 144–151 (CKTCDGSG), 161–168 (CGTCGGAG), 183–190 (CPECHGAG), and 197–204 (CRDCHGQG).

It belongs to the DnaJ family. Homodimer. Zn(2+) serves as cofactor.

The protein localises to the cytoplasm. Functionally, participates actively in the response to hyperosmotic and heat shock by preventing the aggregation of stress-denatured proteins and by disaggregating proteins, also in an autonomous, DnaK-independent fashion. Unfolded proteins bind initially to DnaJ; upon interaction with the DnaJ-bound protein, DnaK hydrolyzes its bound ATP, resulting in the formation of a stable complex. GrpE releases ADP from DnaK; ATP binding to DnaK triggers the release of the substrate protein, thus completing the reaction cycle. Several rounds of ATP-dependent interactions between DnaJ, DnaK and GrpE are required for fully efficient folding. Also involved, together with DnaK and GrpE, in the DNA replication of plasmids through activation of initiation proteins. In Marinomonas sp. (strain MWYL1), this protein is Chaperone protein DnaJ.